The primary structure comprises 311 residues: Olfactory receptor 2A5 (311 aa).

At 1-24 (MTKNQTWVTEFILLGFPLSLRIQM) the chain is on the extracellular side. The N-linked (GlcNAc...) asparagine glycan is linked to N4. The helical transmembrane segment at 25–48 (LLSGLFSLLYVFTLLGNGAILGLI) threads the bilayer. The Cytoplasmic segment spans residues 49 to 56 (WLDSRLHT). The helical transmembrane segment at 57 to 78 (PMYFFLSHLAIIDISYASNNVP) threads the bilayer. Topologically, residues 79-100 (KMLTNLGLNKRKTISFVPCTMQ) are extracellular. An intrachain disulfide couples C97 to C189. A helical transmembrane segment spans residues 101–120 (TFLYMAFAHTECLILVMMSY). Topologically, residues 121 to 139 (DRYMAICHPLQYSVIMRWG) are cytoplasmic. The helical transmembrane segment at 140 to 158 (VCTVLAVTSWACGSLLALV) threads the bilayer. At 159-196 (HVVLILRLPFCGPHEINHFFCEILSVLKLACADTWLNQ) the chain is on the extracellular side. A helical transmembrane segment spans residues 197 to 219 (VVIFAASVFILVGPLCLVLVSYS). Over 220 to 236 (RILAAILRIQSGEGRRK) the chain is Cytoplasmic. A helical membrane pass occupies residues 237–259 (AFSTCSSHLCMVGLFFGSAIVMY). Residues 260–272 (MAPKSRHPEEQQK) are Extracellular-facing. Residues 273–292 (VLSLFYSLFNPMLNPLIYSL) form a helical membrane-spanning segment. The Cytoplasmic portion of the chain corresponds to 293 to 311 (RNAEVKGALKRVLWKQRSK).

This sequence belongs to the G-protein coupled receptor 1 family.

The protein resides in the cell membrane. Its function is as follows. Odorant receptor. The chain is Olfactory receptor 2A5 (OR2A5) from Homo sapiens (Human).